Consider the following 554-residue polypeptide: Solute carrier family 22 member 1 (554 aa).

Residues Met-1–Thr-21 lie on the Cytoplasmic side of the membrane. A helical membrane pass occupies residues Phe-22–Leu-42. The Extracellular portion of the chain corresponds to Gly-43 to Asp-149. Asn-71 is a glycosylation site (N-linked (GlcNAc...) asparagine). A helical transmembrane segment spans residues Leu-150–Ala-170. Residues Asp-171–Lys-176 lie on the Cytoplasmic side of the membrane. Residues Leu-177–Pro-197 traverse the membrane as a helical segment. Residues Asp-198–Arg-206 are Extracellular-facing. The chain crosses the membrane as a helical span at residues Leu-207 to Gly-229. The Cytoplasmic portion of the chain corresponds to Ser-230 to Ala-237. Residues Ile-238–Ile-258 traverse the membrane as a helical segment. Residues Pro-259 to Arg-262 lie on the Extracellular side of the membrane. A helical membrane pass occupies residues Trp-263 to Pro-283. A Proline-rich sequence motif is present at residues Pro-283–Arg-287. Residues Glu-284–Thr-347 are Cytoplasmic-facing. Ser-333 carries the post-translational modification Phosphoserine. Residues Phe-348–Met-368 form a helical membrane-spanning segment. At Gly-369–Asn-374 the chain is on the extracellular side. Residues Val-375–Val-395 form a helical membrane-spanning segment. Residues Thr-396–Arg-402 are Cytoplasmic-facing. Residues Ile-403–Val-423 form a helical membrane-spanning segment. The Extracellular portion of the chain corresponds to Pro-424 to Thr-431. Residues Ile-432 to Val-452 traverse the membrane as a helical segment. The Cytoplasmic portion of the chain corresponds to Asn-453–Leu-464. Residues Gly-465–Phe-485 traverse the membrane as a helical segment. Over Arg-486 to Gln-492 the chain is Extracellular. A helical membrane pass occupies residues Pro-493–Leu-513. Residues Pro-514–Pro-554 lie on the Cytoplasmic side of the membrane.

It belongs to the major facilitator (TC 2.A.1) superfamily. Organic cation transporter (TC 2.A.1.19) family. Post-translationally, phosphorylated. As to expression, expressed in kidney, liver and intestine.

It localises to the basolateral cell membrane. Its subcellular location is the apical cell membrane. The protein resides in the lateral cell membrane. It is found in the basal cell membrane. It carries out the reaction 1-methylnicotinamide(out) = 1-methylnicotinamide(in). The enzyme catalyses dopamine(out) = dopamine(in). The catalysed reaction is serotonin(out) = serotonin(in). It catalyses the reaction (R)-adrenaline(out) = (R)-adrenaline(in). It carries out the reaction (R)-noradrenaline(out) = (R)-noradrenaline(in). The enzyme catalyses histamine(out) = histamine(in). The catalysed reaction is guanidine(out) = guanidine(in). It catalyses the reaction choline(out) = choline(in). It carries out the reaction acetylcholine(in) = acetylcholine(out). The enzyme catalyses thiamine(in) = thiamine(out). The catalysed reaction is spermidine(in) = spermidine(out). It catalyses the reaction agmatine(out) = agmatine(in). It carries out the reaction putrescine(out) = putrescine(in). The enzyme catalyses (R)-carnitine(in) = (R)-carnitine(out). The catalysed reaction is O-isobutanoyl-(R)-carnitine(in) = O-isobutanoyl-(R)-carnitine(out). It catalyses the reaction O-acetyl-(R)-carnitine(in) = O-acetyl-(R)-carnitine(out). It carries out the reaction O-3-hydroxybutanoyl-(R)-carnitine(in) = O-3-hydroxybutanoyl-(R)-carnitine(out). The enzyme catalyses O-propanoyl-(R)-carnitine(in) = O-propanoyl-(R)-carnitine(out). The catalysed reaction is O-butanoyl-(R)-carnitine(in) = O-butanoyl-(R)-carnitine(out). It catalyses the reaction O-2-methylbutanoyl-(R)-carnitine(in) = O-2-methylbutanoyl-(R)-carnitine(out). It carries out the reaction O-3-methylbutanoyl-(R)-carnitine(in) = O-3-methylbutanoyl-(R)-carnitine(out). The enzyme catalyses O-hexanoyl-(R)-carnitine(in) = O-hexanoyl-(R)-carnitine(out). The catalysed reaction is L-histidyl-L-proline diketopiperazine(in) = L-histidyl-L-proline diketopiperazine(out). It catalyses the reaction (R)-salsolinol(in) = (R)-salsolinol(out). It carries out the reaction prostaglandin F2alpha(out) = prostaglandin F2alpha(in). The enzyme catalyses prostaglandin E2(out) = prostaglandin E2(in). Its activity is regulated as follows. Phosphorylation of the transporter leads to changes in its substrate affinity, resulting in a regulation of the transport activity. In contrast with rat ortholog, ASP uptake is inhibited by protein kinase A (PKA) and C (PKC) activation. ASP uptake is also endogenously activated by calmodulin, the calmodulin-dependent kinase II and LCK tyrosine kinase. Inhibited by cGMP, most likely through a cGMP-binding protein that interacts with OCT1. In terms of biological role, electrogenic voltage-dependent transporter that mediates the transport of a variety of organic cations such as endogenous bioactive amines, cationic drugs and xenobiotics. Functions as a pH- and Na(+)-independent, bidirectional transporter. Cation cellular uptake or release is driven by the electrochemical potential (i.e. membrane potential and concentration gradient) and substrate selectivity. Hydrophobicity is a major requirement for recognition in polyvalent substrates and inhibitors. Primarily expressed in the basolateral membrane of hepatocytes and proximal tubules and involved in the uptake and disposition of cationic compounds from the blood by hepatic and renal clearance. Most likely functions as an uptake carrier in enterocytes contributing to the intestinal elimination of organic cations from the systemic circulation. Transports endogenous monoamines such as N-1-methylnicotinamide (NMN), guanidine, neurotransmitters dopamine, serotonin, noradrenaline, adrenaline and histamine, and quaternary ammonium compound such as choline. Also transports natural polyamines such as spermidine, agmatine and putrescine at low affinity, but relatively high turnover. Involved in the hepatic and intestinal uptake of the vitamin B1/thiamine, hence regulating hepatic lipid and energy metabolism. Contributes to the influx and efflux of fatty acid carriers carnitines and acylcarnitines across the basolateral membrane of hepatocytes, from the liver to the systemic circulation and inversely and may be involved in regulating the systemic availability of hepatic acylcarnitines. Also capable of transporting non-amine endogenous compounds such as prostaglandin E2 (PGE2) and prostaglandin F2-alpha (PGF2-alpha). May contribute to the transport of cationic compounds in testes across the blood-testis-barrier. Also mediates the uptake of xenobiotics tributylmethylammonium (TBuMA), quinidine, N-methyl-quinine (NMQ), N-methyl-quinidine (NMQD) N-(4,4-azo-n-pentyl)-quinuclidine (APQ), azidoprocainamide methoiodide (AMP), N-(4,4-azo-n-pentyl)-21-deoxyajmalinium (APDA) and 4-(4-(dimethylamino)styryl)-N-methylpyridinium (ASP). The protein is Solute carrier family 22 member 1 (SLC22A1) of Oryctolagus cuniculus (Rabbit).